Consider the following 421-residue polypeptide: Enolase (421 aa).

A (2R)-2-phosphoglycerate-binding site is contributed by glutamine 162. Glutamate 204 serves as the catalytic Proton donor. 3 residues coordinate Mg(2+): aspartate 241, glutamate 284, and aspartate 311. 4 residues coordinate (2R)-2-phosphoglycerate: lysine 336, arginine 365, serine 366, and lysine 387. Lysine 336 serves as the catalytic Proton acceptor.

The protein belongs to the enolase family. The cofactor is Mg(2+).

The protein resides in the cytoplasm. It is found in the secreted. The protein localises to the cell surface. It catalyses the reaction (2R)-2-phosphoglycerate = phosphoenolpyruvate + H2O. It functions in the pathway carbohydrate degradation; glycolysis; pyruvate from D-glyceraldehyde 3-phosphate: step 4/5. Catalyzes the reversible conversion of 2-phosphoglycerate (2-PG) into phosphoenolpyruvate (PEP). It is essential for the degradation of carbohydrates via glycolysis. This chain is Enolase, found in Nautilia profundicola (strain ATCC BAA-1463 / DSM 18972 / AmH).